Reading from the N-terminus, the 807-residue chain is Probable dimethyl sulfoxide reductase chain YnfF (807 aa).

The tat-type signal signal peptide spans 1–45 (MKIHTTEALMKAEISRRSLMKTSALGSLALASSAFTLPFSQMVRA). In terms of domain architecture, 4Fe-4S Mo/W bis-MGD-type spans 52–113 (EKAVWSSCTV…SIRRRMNHPD (62 aa)). Residues cysteine 59, cysteine 63, cysteine 67, and cysteine 99 each coordinate [4Fe-4S] cluster. A Mo-bis(molybdopterin guanine dinucleotide)-binding site is contributed by serine 195.

The protein belongs to the prokaryotic molybdopterin-containing oxidoreductase family. In terms of assembly, the complex consists of three subunits: YnfF, the reductase; YnfG, an electron transfer protein, and YnfH, a membrane anchor protein. [4Fe-4S] cluster is required as a cofactor. Requires Mo-bis(molybdopterin guanine dinucleotide) as cofactor. In terms of processing, exported by the Tat system. The position of the signal peptide cleavage has not been experimentally proven. Can also be exported by the Sec system.

It localises to the cell membrane. Its function is as follows. Terminal reductase during anaerobic growth on various sulfoxide and N-oxide compounds. In Escherichia coli (strain K12), this protein is Probable dimethyl sulfoxide reductase chain YnfF (ynfF).